The chain runs to 693 residues: Elongation factor G 1 (693 aa).

The tr-type G domain occupies 4-281; that stretch reads NKLRNIGISA…AVTRFLPSPH (278 aa). GTP-binding positions include 13–20, 80–84, and 134–137; these read AHIDSGKT, DTPGH, and NKCD.

The protein belongs to the TRAFAC class translation factor GTPase superfamily. Classic translation factor GTPase family. EF-G/EF-2 subfamily.

The protein localises to the cytoplasm. Its function is as follows. Catalyzes the GTP-dependent ribosomal translocation step during translation elongation. During this step, the ribosome changes from the pre-translocational (PRE) to the post-translocational (POST) state as the newly formed A-site-bound peptidyl-tRNA and P-site-bound deacylated tRNA move to the P and E sites, respectively. Catalyzes the coordinated movement of the two tRNA molecules, the mRNA and conformational changes in the ribosome. The sequence is that of Elongation factor G 1 from Borreliella afzelii (strain PKo) (Borrelia afzelii).